Here is a 420-residue protein sequence, read N- to C-terminus: MRKKAAGGAERRPLKPRTEAAAAAPAGRAMPSDHSRMKLRRDCSRPSLQWYTRAQNKMRRPNLLLKDILKCTLLLFGVWILFYILKLNHTTEECDMKRMPYMDPDRIKRAQQYAQQVLQKECRPQFAKRSMAQLFGSRYSLDLPPFVTKVPAESEAEYKYDPPFGFRKFSGKVQTLLELLPEHDFPEHLRAKSCKHCVVIGSGGILHGLEMGHALNQFDVVIRLNNAPVEGYSEHVGNKTTIRMTYPEGAPLSDLEYYSSDLFVTVLFKSVDFNWLQAMVKNETLPFWVRLFFWKQVAEKIPLQPKQFRILNPVIIKETAFDILQYSEPQSRFWGRDKNVPTIGVIAVVLATHLCDEVSLAGFSYALNQPRTPLHYFDNLCMAAMNFQTMHNVTTETNFLLKLVREGVVRDLSGGIHSEF.

The interval 1 to 39 is disordered; it reads MRKKAAGGAERRPLKPRTEAAAAAPAGRAMPSDHSRMKL. Over 1-67 the chain is Cytoplasmic; the sequence is MRKKAAGGAE…MRRPNLLLKD (67 aa). Basic and acidic residues predominate over residues 9–18; the sequence is AERRPLKPRT. The segment covering 20 to 29 has biased composition (low complexity); sequence AAAAAPAGRA. The helical transmembrane segment at 68 to 88 threads the bilayer; that stretch reads ILKCTLLLFGVWILFYILKLN. The Lumenal segment spans residues 89-420; the sequence is HTTEECDMKR…DLSGGIHSEF (332 aa). Cysteines 197 and 355 form a disulfide. The N-linked (GlcNAc...) asparagine glycan is linked to Asn238.

This sequence belongs to the glycosyltransferase 29 family.

The protein resides in the golgi apparatus membrane. It carries out the reaction a beta-D-Gal-(1-&gt;4)-beta-D-Glc-(1&lt;-&gt;1)-Cer(d18:1(4E)) + CMP-N-acetyl-beta-neuraminate = a ganglioside GM3 (d18:1(4E)) + CMP + H(+). The catalysed reaction is ganglioside GA2 (d18:1(4E)/18:0) + CMP-N-acetyl-beta-neuraminate = ganglioside GM2 (d18:1(4E)/18:0) + CMP + H(+). It catalyses the reaction a beta-D-Gal-(1&lt;-&gt;1')-ceramide + CMP-N-acetyl-beta-neuraminate = N-acetyl-alpha-neuraminosyl-(2-&gt;3)-beta-D-galactosyl-(1&lt;-&gt;1')-ceramide + CMP + H(+). The enzyme catalyses ganglioside GA1 (d18:1(4E)/18:0) + CMP-N-acetyl-beta-neuraminate = ganglioside GM1 (d18:1(4E)/18:0) + CMP + H(+). Its function is as follows. Transfers the sialyl group (N-acetyl-alpha-neuraminyl or NeuAc) from CMP-NeuAc to the non-reducing terminal galactose (Gal) of glycosphingolipids forming gangliosides (important molecules involved in the regulation of multiple cellular processes, including cell proliferation and differentiation, apoptosis, embryogenesis, development, and oncogenesis). Mainly involved in the biosynthesis of ganglioside GM3 but can also use different glycolipids as substrate acceptors such as D-galactosylceramide (GalCer), asialo-GM2 (GA2) and asialo-GM1 (GA1), although less preferentially than beta-D-Gal-(1-&gt;4)-beta-D-Glc-(1&lt;-&gt;1)-Cer (LacCer). This is Lactosylceramide alpha-2,3-sialyltransferase (ST3GAL5) from Bos taurus (Bovine).